A 196-amino-acid chain; its full sequence is Large ribosomal subunit protein uL5 (196 aa).

This sequence belongs to the universal ribosomal protein uL5 family. As to quaternary structure, part of the 50S ribosomal subunit; part of the 5S rRNA/L5/L18/L25 subcomplex. Contacts the 5S rRNA and the P site tRNA. Forms a bridge to the 30S subunit in the 70S ribosome.

Functionally, this is one of the proteins that bind and probably mediate the attachment of the 5S RNA into the large ribosomal subunit, where it forms part of the central protuberance. In the 70S ribosome it contacts protein S13 of the 30S subunit (bridge B1b), connecting the 2 subunits; this bridge is implicated in subunit movement. Contacts the P site tRNA; the 5S rRNA and some of its associated proteins might help stabilize positioning of ribosome-bound tRNAs. This chain is Large ribosomal subunit protein uL5, found in Rhodopirellula baltica (strain DSM 10527 / NCIMB 13988 / SH1).